We begin with the raw amino-acid sequence, 375 residues long: Chaperone protein DnaJ (375 aa).

Residues 5–68 (DYYEILGVSK…KKRAQYDQFG (64 aa)) form the J domain. A CR-type zinc finger spans residues 135–217 (GISKNINYDR…CYGKKVINER (83 aa)). Cysteine 148, cysteine 151, cysteine 165, cysteine 168, cysteine 191, cysteine 194, cysteine 205, and cysteine 208 together coordinate Zn(2+). CXXCXGXG motif repeat units follow at residues 148 to 155 (CHKCQGTG), 165 to 172 (CTKCHGRG), 191 to 198 (CHECEGTG), and 205 to 212 (CEQCYGKK).

It belongs to the DnaJ family. In terms of assembly, homodimer. Zn(2+) serves as cofactor.

Its subcellular location is the cytoplasm. Its function is as follows. Participates actively in the response to hyperosmotic and heat shock by preventing the aggregation of stress-denatured proteins and by disaggregating proteins, also in an autonomous, DnaK-independent fashion. Unfolded proteins bind initially to DnaJ; upon interaction with the DnaJ-bound protein, DnaK hydrolyzes its bound ATP, resulting in the formation of a stable complex. GrpE releases ADP from DnaK; ATP binding to DnaK triggers the release of the substrate protein, thus completing the reaction cycle. Several rounds of ATP-dependent interactions between DnaJ, DnaK and GrpE are required for fully efficient folding. Also involved, together with DnaK and GrpE, in the DNA replication of plasmids through activation of initiation proteins. This Ureaplasma parvum serovar 3 (strain ATCC 700970) protein is Chaperone protein DnaJ.